Consider the following 347-residue polypeptide: Biotin synthase (347 aa).

One can recognise a Radical SAM core domain in the interval 40-258 (AQVQVSTLLS…IAVARIVMPR (219 aa)). Residues C55, C59, and C62 each coordinate [4Fe-4S] cluster. The [2Fe-2S] cluster site is built by C99, C130, C190, and R262.

It belongs to the radical SAM superfamily. Biotin synthase family. Homodimer. Requires [4Fe-4S] cluster as cofactor. [2Fe-2S] cluster is required as a cofactor.

The catalysed reaction is (4R,5S)-dethiobiotin + (sulfur carrier)-SH + 2 reduced [2Fe-2S]-[ferredoxin] + 2 S-adenosyl-L-methionine = (sulfur carrier)-H + biotin + 2 5'-deoxyadenosine + 2 L-methionine + 2 oxidized [2Fe-2S]-[ferredoxin]. It participates in cofactor biosynthesis; biotin biosynthesis; biotin from 7,8-diaminononanoate: step 2/2. In terms of biological role, catalyzes the conversion of dethiobiotin (DTB) to biotin by the insertion of a sulfur atom into dethiobiotin via a radical-based mechanism. This is Biotin synthase from Stenotrophomonas maltophilia (strain R551-3).